The primary structure comprises 365 residues: MLKTQEISINVGPQHPSTHGVFRIILKLDGETIVDAEPVVGYLHRGIEKLAEDRTYTQVIPYTDRMDYLGAMSYNLGYVQAIEKLMGIEVPERAEFIRVIATELSRIASHHVFLASMSLDMGSYTGWMYPFRDRELVLELLEMLTGSRMTFSFMRIGGVADDLPEGFIEKAKEYLPKILDGVDEEEGLLAGNEIFLARTKGLAPVSVEKALAWGWGGVNLRASGYKFDLRKNRPYSVYDRFEFDIPTGANGDCWDRFYLRLAEIRQSVKIIEQALEMIPEGPIMAKVPKVIKPPVGEVYHEVEAPKGILGYYVVSDGSTKPYRMHVRRPSFINIGMLKELLIGTKLADFITIFASIDVVLGDVDC.

The protein belongs to the complex I 49 kDa subunit family. In terms of assembly, NDH-1 is composed of 14 different subunits. Subunits NuoB, C, D, E, F, and G constitute the peripheral sector of the complex.

The protein localises to the cell membrane. It catalyses the reaction a quinone + NADH + 5 H(+)(in) = a quinol + NAD(+) + 4 H(+)(out). Its function is as follows. NDH-1 shuttles electrons from NADH, via FMN and iron-sulfur (Fe-S) centers, to quinones in the respiratory chain. The immediate electron acceptor for the enzyme in this species is believed to be a menaquinone. Couples the redox reaction to proton translocation (for every two electrons transferred, four hydrogen ions are translocated across the cytoplasmic membrane), and thus conserves the redox energy in a proton gradient. In Carboxydothermus hydrogenoformans (strain ATCC BAA-161 / DSM 6008 / Z-2901), this protein is NADH-quinone oxidoreductase subunit D.